Reading from the N-terminus, the 159-residue chain is Late embryogenesis abundant protein 50 (159 aa).

2 SMP domains span residues 30–87 (TTLT…RNQK) and 96–151 (NLGD…YKLN).

Belongs to the LEA type SMP family.

It is found in the cytoplasm. Its subcellular location is the nucleus. Its function is as follows. LEA proteins are late embryonic proteins abundant in higher plant seed embryos. The function of those proteins is not known. The protein is Late embryogenesis abundant protein 50 of Arabidopsis thaliana (Mouse-ear cress).